Consider the following 335-residue polypeptide: Anthranilate phosphoribosyltransferase (335 aa).

Residues G79, 82 to 83 (GD), T87, 89 to 92 (NVST), 107 to 115 (KHCNKGVSS), and S119 contribute to the 5-phospho-alpha-D-ribose 1-diphosphate site. G79 serves as a coordination point for anthranilate. S91 serves as a coordination point for Mg(2+). N110 is a binding site for anthranilate. An anthranilate-binding site is contributed by R165. The Mg(2+) site is built by D223 and E224.

This sequence belongs to the anthranilate phosphoribosyltransferase family. Homodimer. Mg(2+) is required as a cofactor.

It catalyses the reaction N-(5-phospho-beta-D-ribosyl)anthranilate + diphosphate = 5-phospho-alpha-D-ribose 1-diphosphate + anthranilate. It functions in the pathway amino-acid biosynthesis; L-tryptophan biosynthesis; L-tryptophan from chorismate: step 2/5. Catalyzes the transfer of the phosphoribosyl group of 5-phosphorylribose-1-pyrophosphate (PRPP) to anthranilate to yield N-(5'-phosphoribosyl)-anthranilate (PRA). The protein is Anthranilate phosphoribosyltransferase of Buchnera aphidicola subsp. Schizaphis graminum (strain Sg).